The primary structure comprises 339 residues: Putative clathrin assembly protein At1g14686 (339 aa).

The 133-residue stretch at 16-148 (SLIAADDILT…ILFHDGNRHR (133 aa)) folds into the ENTH domain. Positions 283 to 307 (ESSEESAERTEIAEEEEEEEEEIET) are disordered. Residues 295–305 (AEEEEEEEEEI) are compositionally biased toward acidic residues.

The protein resides in the membrane. The protein localises to the clathrin-coated pit. It is found in the golgi apparatus. It localises to the cytoplasmic vesicle. Its subcellular location is the clathrin-coated vesicle. The polypeptide is Putative clathrin assembly protein At1g14686 (Arabidopsis thaliana (Mouse-ear cress)).